A 314-amino-acid chain; its full sequence is Melanoma-associated antigen 2 (314 aa).

Basic and acidic residues predominate over residues 1-20 (MPLEQRSQHCKPEEGLEARG). The tract at residues 1-69 (MPLEQRSQHC…SPPHSPQGAS (69 aa)) is disordered. Positions 21–44 (EALGLVGAQAPATEEQQTASSSST) are enriched in low complexity. The residue at position 64 (S64) is a Phosphoserine. The MAGE domain maps to 109-308 (ISRKMVELVH…ISYPPLHERA (200 aa)).

Interacts with TRIM28 and UBE2H. Interacts with HDAC3. Interacts with PML (isoform PML-1, isoform PML-2, isoform PML-3, isoform PML-4 and isoform PML-5). In terms of tissue distribution, expressed in many tumors of several types, such as melanoma, head and neck squamous cell carcinoma, lung carcinoma and breast carcinoma, but not in normal tissues except for testes.

Its subcellular location is the nucleus. The protein resides in the PML body. Reduces p53/TP53 transactivation function through recruitment of HDAC3 to p53/TP53 transcription sites. Also represses p73/TP73 activity. Proposed to enhance ubiquitin ligase activity of RING-type zinc finger-containing E3 ubiquitin-protein ligases. In vitro enhances ubiquitin ligase activity of TRIM28 and stimulates p53/TP53 ubiquitination by TRIM28 potentially in presence of Ubl-conjugating enzyme UBE2H. Proposed to act through recruitment and/or stabilization of the Ubl-conjugating enzyme (E2) at the E3:substrate complex. May play a role in embryonal development and tumor transformation or aspects of tumor progression. In vitro promotes cell viability in melanoma cell lines. Antigen recognized on a melanoma by autologous cytolytic T-lymphocytes. Negatively regulates acetylation and sumoylation of PML and represses PML-induced p53/TP53 acetylation and activation. This Homo sapiens (Human) protein is Melanoma-associated antigen 2 (MAGEA2).